The following is a 35-amino-acid chain: Phospholipase A2 neuwieditoxin-1 (35 aa).

Tyrosine 27, glycine 29, and glycine 31 together coordinate Ca(2+).

It belongs to the phospholipase A2 family. Group II subfamily. D49 sub-subfamily. As to quaternary structure, dimer. Requires Ca(2+) as cofactor. In terms of tissue distribution, expressed by the venom gland.

Its subcellular location is the secreted. The enzyme catalyses a 1,2-diacyl-sn-glycero-3-phosphocholine + H2O = a 1-acyl-sn-glycero-3-phosphocholine + a fatty acid + H(+). Snake venom phospholipase A2 (PLA2) that shows presynaptic neurotoxicity. 10 ug/ml of this protein produce complete neuromuscular blockade up to 80 minutes, without inhibiting the responses to acetylcholine (ACh) and potassium chloride (KCl). In addition, it produces a calcium-dependent blockade of acetylcholine release and causes appearance of giant miniature end-plate potentials. PLA2 catalyzes the calcium-dependent hydrolysis of the 2-acyl groups in 3-sn-phosphoglycerides. This chain is Phospholipase A2 neuwieditoxin-1, found in Bothrops pauloensis (Neuwied's lancehead).